Reading from the N-terminus, the 1091-residue chain is MAPSAVGLLVFLLQAALALNPEDPNVCSHWESYAVTVQESYAHPFDQIYYTRCADILNWFKCTRHRISYKTAYRRGLRTMYRRRSQCCPGYYENGDFCIPLCTEECMHGRCVSPDTCHCEPGWGGPDCSSGCDSEHWGPHCSNRCQCQNGALCNPITGACVCAPGFRGWRCEELCAPGTHGKGCQLLCQCHHGASCDPRTGECLCAPGYTGVYCEELCPPGSHGAHCELRCPCQNGGTCHHITGECACPPGWTGAVCAQPCPPGTFGQNCSQDCPCHHGGQCDHVTGQCHCTAGYMGDRCQEECPFGTFGFLCSQRCDCHNGGQCSPATGACECEPGYKGPSCQERLCPEGLHGPGCTLPCPCDTENTISCHPVTGACTCQPGWSGHYCNESCPAGYYGNGCQLPCTCQNGADCHSITGSCTCAPGFMGEVCAVPCAAGTYGPNCSSVCSCSNGGTCSPVDGSCTCREGWQGLDCSLPCPSGTWGLNCNETCICANGAACSPFDGSCACTPGWLGDSCELPCPDGTFGLNCSEHCDCSHADGCDPVTGHCCCLAGWTGIRCDSTCPPGRWGPNCSVSCSCENGGSCSPEDGSCECAPGFRGPLCQRICPPGFYGHGCAQPCPLCVHSRGPCHHISGICECLPGFSGALCNQVCAGGHFGQDCAQLCSCANNGTCSPIDGSCQCFPGWIGKDCSQACPSGFWGSACFHTCSCHNGASCSAEDGACHCTPGWTGLFCTQRCPSAFFGKDCGHICQCQNGASCDHITGKCTCRTGFSGRHCEQRCAPGTFGYGCQQLCECMNNATCDHVTGTCYCSPGFKGIRCDQAALMMDELNPYTKISPALGAERHSVGAVTGIVLLLFLVVVLLGLFAWRRRRQKEKGRDLAPRVSYTPAMRMTSTDYSLSDLSQSSSHAQCFSNASYHTLACGGPATSQASTLDRNSPTKLSNKSLDRDTAGWTPYSYVNVLDSHFQISALEARYPPEDFYIELRHLSRHAEPHSPGTCGMDRRQNTYIMDKGFKDYMKESVCSSSTCSLNSSENPYATIKDPPILTCKLPESSYVEMKSPVHLGSPYTDVPSLSTSNKNIYEVGRCLT.

A signal peptide spans 1–18 (MAPSAVGLLVFLLQAALA). The Extracellular segment spans residues 19–847 (LNPEDPNVCS…SPALGAERHS (829 aa)). An EMI domain is found at 23–100 (DPNVCSHWES…YYENGDFCIP (78 aa)). Cystine bridges form between cysteine 27/cysteine 88, cysteine 53/cysteine 62, cysteine 87/cysteine 98, cysteine 102/cysteine 117, cysteine 119/cysteine 128, cysteine 145/cysteine 153, cysteine 147/cysteine 160, cysteine 162/cysteine 171, cysteine 184/cysteine 196, cysteine 190/cysteine 203, cysteine 205/cysteine 214, cysteine 227/cysteine 239, cysteine 233/cysteine 246, and cysteine 248/cysteine 257. EGF-like domains follow at residues 94 to 129 (NGDF…PDCS), 142 to 172 (SNRC…WRCE), 180 to 215 (HGKG…VYCE), 223 to 258 (HGAH…AVCA), 266 to 301 (FGQN…DRCQ), 314 to 344 (SQRC…PSCQ), 398 to 433 (YGNG…EVCA), 441 to 476 (YGPN…LDCS), and 484 to 519 (WGLN…DSCE). Residue asparagine 269 is glycosylated (N-linked (GlcNAc...) asparagine). Disulfide bonds link cysteine 270-cysteine 282, cysteine 276-cysteine 289, cysteine 291-cysteine 300, cysteine 317-cysteine 325, cysteine 319-cysteine 332, cysteine 334-cysteine 343, cysteine 402-cysteine 414, cysteine 408-cysteine 421, cysteine 423-cysteine 432, cysteine 445-cysteine 457, cysteine 451-cysteine 464, cysteine 466-cysteine 475, cysteine 488-cysteine 500, cysteine 494-cysteine 507, and cysteine 509-cysteine 518. A glycan (N-linked (GlcNAc...) asparagine) is linked at asparagine 530. EGF-like domains are found at residues 570–605 (WGPN…PLCQ), 613–650 (YGHG…ALCN), 658–693 (FGQD…KDCS), 706–736 (FHTC…LFCT), 749–779 (GHIC…RHCE), and 787–822 (FGYG…IRCD). 18 disulfides stabilise this stretch: cysteine 574/cysteine 586, cysteine 580/cysteine 593, cysteine 595/cysteine 604, cysteine 617/cysteine 631, cysteine 621/cysteine 638, cysteine 640/cysteine 649, cysteine 662/cysteine 674, cysteine 668/cysteine 681, cysteine 683/cysteine 692, cysteine 709/cysteine 717, cysteine 711/cysteine 724, cysteine 726/cysteine 735, cysteine 752/cysteine 760, cysteine 754/cysteine 767, cysteine 769/cysteine 778, cysteine 791/cysteine 803, cysteine 797/cysteine 810, and cysteine 812/cysteine 821. Residues 848-868 (VGAVTGIVLLLFLVVVLLGLF) traverse the membrane as a helical segment. The Cytoplasmic segment spans residues 869–1091 (AWRRRRQKEK…NIYEVGRCLT (223 aa)).

Belongs to the MEGF family. Homomer. Does not interact with MEGF10.

The protein resides in the cell membrane. Its subcellular location is the basolateral cell membrane. Functionally, may regulate the mosaic spacing of specific neuron subtypes in the retina through homotypic retinal neuron repulsion. Mosaics provide a mechanism to distribute each cell type evenly across the retina, ensuring that all parts of the visual field have access to a full set of processing elements. This is Multiple epidermal growth factor-like domains protein 11 (Megf11) from Mus musculus (Mouse).